We begin with the raw amino-acid sequence, 308 residues long: F420-non-reducing hydrogenase subunit G (308 aa).

The protein belongs to the [NiFe]/[NiFeSe] hydrogenase small subunit family. The F420-non-reducing hydrogenase is composed of three subunits; MvhA, MvhD and MvhG. It forms a complex with the heterodisulfide reductase (hdr).

Functionally, part of a complex that provides reducing equivalents for heterodisulfide reductase. The protein is F420-non-reducing hydrogenase subunit G (mvhG) of Methanothermobacter thermautotrophicus (strain ATCC 29096 / DSM 1053 / JCM 10044 / NBRC 100330 / Delta H) (Methanobacterium thermoautotrophicum).